The chain runs to 100 residues: Coiled-coil domain-containing protein 167 (100 aa).

Residues 14–81 adopt a coiled-coil conformation; sequence VASEIDRVEE…VLRGENRRNM (68 aa). A helical transmembrane segment spans residues 82 to 99; sequence MLSVALLAISALFYYTFI.

Its subcellular location is the membrane. The chain is Coiled-coil domain-containing protein 167 (ccdc167) from Danio rerio (Zebrafish).